Consider the following 367-residue polypeptide: Glutamate 5-kinase (367 aa).

Lys10 lines the ATP pocket. Ser50, Asp137, and Asn149 together coordinate substrate. Residues Thr169 to Asp170 and Thr211 to Lys217 each bind ATP. Residues Ala275–Glu353 enclose the PUA domain.

The protein belongs to the glutamate 5-kinase family.

Its subcellular location is the cytoplasm. It carries out the reaction L-glutamate + ATP = L-glutamyl 5-phosphate + ADP. The protein operates within amino-acid biosynthesis; L-proline biosynthesis; L-glutamate 5-semialdehyde from L-glutamate: step 1/2. Its function is as follows. Catalyzes the transfer of a phosphate group to glutamate to form L-glutamate 5-phosphate. This is Glutamate 5-kinase from Cronobacter sakazakii (strain ATCC BAA-894) (Enterobacter sakazakii).